The chain runs to 881 residues: Translation initiation factor IF-2 (881 aa).

Disordered stretches follow at residues 31–147 (KLAQ…TKVP) and 165–291 (SVVG…HYDE). A compositionally biased stretch (basic and acidic residues) spans 42–55 (NSSEKPSAKVAEKV). Over residues 68–77 (ATPESVSSET) the composition is skewed to polar residues. The span at 114–128 (VEEEIASSTDSEPEV) shows a compositional bias: acidic residues. Positions 191-203 (PKKEDKPAPKERS) are enriched in basic and acidic residues. Polar residues predominate over residues 204 to 233 (GQAQAKPQQSSEASSENKPHSPNNNRSSQP). Residues 235-267 (YRRDTSKKPGSDFRDRAKKDDNPKAFTGRDRYG) show a composition bias toward basic and acidic residues. Positions 278-287 (RKKRVQKTKK) are enriched in basic residues. A tr-type G domain is found at 387–556 (IRPPIVAFMG…ALQAEVLELK (170 aa)). A G1 region spans residues 396 to 403 (GHVDHGKT). 396–403 (GHVDHGKT) provides a ligand contact to GTP. A G2 region spans residues 421–425 (AITQH). The G3 stretch occupies residues 442–445 (DTPG). GTP is bound by residues 442–446 (DTPGH) and 496–499 (NKCD). The interval 496–499 (NKCD) is G4. Positions 532–534 (SAK) are G5.

The protein belongs to the TRAFAC class translation factor GTPase superfamily. Classic translation factor GTPase family. IF-2 subfamily.

The protein resides in the cytoplasm. One of the essential components for the initiation of protein synthesis. Protects formylmethionyl-tRNA from spontaneous hydrolysis and promotes its binding to the 30S ribosomal subunits. Also involved in the hydrolysis of GTP during the formation of the 70S ribosomal complex. The sequence is that of Translation initiation factor IF-2 from Chlamydia felis (strain Fe/C-56) (Chlamydophila felis).